The sequence spans 299 residues: GTPase Era (299 aa).

An Era-type G domain is found at 4-171 (KSGFVAILGR…IKLLTDNLEE (168 aa)). The G1 stretch occupies residues 12 to 19 (GRPNVGKS). Residue 12–19 (GRPNVGKS) coordinates GTP. Positions 38-42 (QTTRN) are G2. The interval 59-62 (DTPG) is G3. Residues 59-63 (DTPGI) and 121-124 (NKID) contribute to the GTP site. A G4 region spans residues 121-124 (NKID). Residues 150–152 (ISA) are G5. Residues 202-280 (TQQEVPHSVA…YLETWVKVKK (79 aa)) enclose the KH type-2 domain.

It belongs to the TRAFAC class TrmE-Era-EngA-EngB-Septin-like GTPase superfamily. Era GTPase family. As to quaternary structure, monomer.

It localises to the cytoplasm. The protein localises to the cell membrane. Its function is as follows. An essential GTPase that binds both GDP and GTP, with rapid nucleotide exchange. Plays a role in 16S rRNA processing and 30S ribosomal subunit biogenesis and possibly also in cell cycle regulation and energy metabolism. The chain is GTPase Era from Streptococcus agalactiae serotype III (strain NEM316).